The chain runs to 717 residues: Radial spoke head protein 6 homolog A (717 aa).

Disordered regions lie at residues 1–65 (MGDL…SLSQ), 503–523 (SEEE…YEEN), 563–588 (TEEE…QEVG), and 672–717 (GPEI…ETDD). Composition is skewed to acidic residues over residues 503–513 (SEEEGDEEEEG), 564–585 (EEEE…EVEQ), and 700–717 (TEEE…ETDD).

Belongs to the flagellar radial spoke RSP4/6 family. In terms of assembly, component of the axonemal radial spoke 1 (RS1) and 2 (RS2) complexes, at least composed of spoke head proteins RSPH1, RSPH3, RSPH9 and the cilia-specific component RSPH4A or sperm-specific component RSPH6A, spoke stalk proteins RSPH14, DNAJB13, DYDC1, ROPN1L and NME5, and the RS1 complex-specific anchor protein IQUB. Interacts with RSPH1. Interacts with RSPH3B. Interacts with RSPH4A. Interacts with RSPH9. Interacts with RSPH10B. Post-translationally, phosphorylated by PKA. Phosphorylation increases in capacitated sperm.

The protein localises to the cytoplasm. It is found in the cytoskeleton. It localises to the flagellum axoneme. Functionally, functions as part of radial spoke complexes in the axoneme of sperm flagella that play an important part in motility. The triple radial spokes (RS1, RS2 and RS3) are required to modulate beating of the sperm flagellum. In Homo sapiens (Human), this protein is Radial spoke head protein 6 homolog A.